The chain runs to 120 residues: Peptidyl-tRNA hydrolase (120 aa).

This sequence belongs to the PTH2 family.

It is found in the cytoplasm. The catalysed reaction is an N-acyl-L-alpha-aminoacyl-tRNA + H2O = an N-acyl-L-amino acid + a tRNA + H(+). Functionally, the natural substrate for this enzyme may be peptidyl-tRNAs which drop off the ribosome during protein synthesis. The chain is Peptidyl-tRNA hydrolase from Pyrobaculum aerophilum (strain ATCC 51768 / DSM 7523 / JCM 9630 / CIP 104966 / NBRC 100827 / IM2).